The primary structure comprises 662 residues: DNA ligase (662 aa).

Residues 31-35 (DKDYD) and 79-80 (SL) contribute to the NAD(+) site. K121 acts as the N6-AMP-lysine intermediate in catalysis. 3 residues coordinate NAD(+): R143, E177, and K313. Residues C406, C409, C422, and C428 each coordinate Zn(2+). The BRCT domain maps to 586–662 (VLESPFMGKT…LSEEEFENMI (77 aa)).

Belongs to the NAD-dependent DNA ligase family. LigA subfamily. It depends on Mg(2+) as a cofactor. Requires Mn(2+) as cofactor.

It catalyses the reaction NAD(+) + (deoxyribonucleotide)n-3'-hydroxyl + 5'-phospho-(deoxyribonucleotide)m = (deoxyribonucleotide)n+m + AMP + beta-nicotinamide D-nucleotide.. Its function is as follows. DNA ligase that catalyzes the formation of phosphodiester linkages between 5'-phosphoryl and 3'-hydroxyl groups in double-stranded DNA using NAD as a coenzyme and as the energy source for the reaction. It is essential for DNA replication and repair of damaged DNA. In Clostridium perfringens (strain 13 / Type A), this protein is DNA ligase.